Consider the following 898-residue polypeptide: Transportin-1 (898 aa).

Met1 carries the N-acetylmethionine modification. HEAT repeat units lie at residues 19-46, 51-89, 98-131, 137-174, 181-211, 224-251, 263-290, 306-397, 405-433, 445-472, 486-519, 527-560, 568-606, 614-665, 676-707, 715-748, 756-791, 799-832, 841-872, and 875-895; these read GLQQ…QKLE, YPDF…AHFQ, FIKS…KGEL, LLPK…LDSD, NIMI…QFII, FIEN…VMLL, HNIV…FWLT, PKLI…LANV, HILP…GAIA, PELI…TLSR, LKPL…EEEA, LAYI…ADSV, EYIQ…TALQ, EPVY…GLGG, ILTL…KACF, ADFM…IQMG, PMVL…YVCP, QQFI…ISVN, IFFC…KNQV, and ENWR…LAAF. In terms of domain architecture, Importin N-terminal spans 41–109; the sequence is VQQKLEQLNQ…KSECLNNIGD (69 aa). The segment at 347-374 is disordered; that stretch reads FHRSRTVAQQHDEDGIEEEDDDDDEIDD. The span at 360–374 shows a compositional bias: acidic residues; sequence DGIEEEDDDDDEIDD.

This sequence belongs to the importin beta family. Importin beta-2 subfamily. As to quaternary structure, identified in a complex that contains TNPO1, RAN and RANBP1. Binds HNRPA1, HNRPA2, HNRNPDL, RPS7, RPL5 and RAN. Interacts with H2A, H2B, H3 and H4 histones. Interacts with isoform 1 and isoform 5 of ADAR/ADAR1 (via DRBM 3 domain). Interacts with SNAI1 (via zinc fingers); the interaction mediates SNAI1 nuclear import. Interacts with SNAI2 (via zinc fingers). Interacts with RPL23A (via BIB domain) and SRP19; this interaction is involved in RPL23A and SRP19 import into the nucleus. Interacts (via HEAT repeats 8-12) with BAP1 (via non-classical PY-NLS); this interaction is direct, is involved in BAP1 nuclear import and disrupts BAP1 homodimerization. (Microbial infection) Binds to HIV-1 Rev.

It is found in the cytoplasm. The protein localises to the nucleus. Functionally, functions in nuclear protein import as nuclear transport receptor. Serves as receptor for nuclear localization signals (NLS) in cargo substrates. May mediate docking of the importin/substrate complex to the nuclear pore complex (NPC) through binding to nucleoporin and the complex is subsequently translocated through the pore by an energy requiring, Ran-dependent mechanism. At the nucleoplasmic side of the NPC, Ran binds to the importin, the importin/substrate complex dissociates and importin is re-exported from the nucleus to the cytoplasm where GTP hydrolysis releases Ran. The directionality of nuclear import is thought to be conferred by an asymmetric distribution of the GTP- and GDP-bound forms of Ran between the cytoplasm and nucleus. Involved in nuclear import of M9-containing proteins. In vitro, binds directly to the M9 region of the heterogeneous nuclear ribonucleoproteins (hnRNP), A1 and A2 and mediates their nuclear import. Involved in hnRNP A1/A2 nuclear export. Mediates the nuclear import of ribosomal proteins RPL23A, RPS7 and RPL5. In vitro, mediates nuclear import of H2A, H2B, H3 and H4 histones. In vitro, mediates nuclear import of SRP19. Mediates nuclear import of ADAR/ADAR1 isoform 1 and isoform 5 in a RanGTP-dependent manner. Main mediator of PR-DUB complex component BAP1 nuclear import; acts redundantly with the karyopherins KPNA1 and KPNA2. In terms of biological role, (Microbial infection) In case of HIV-1 infection, binds and mediates the nuclear import of HIV-1 Rev. This is Transportin-1 (TNPO1) from Homo sapiens (Human).